A 78-amino-acid polypeptide reads, in one-letter code: Conotoxin TsMEKL-P012 (78 aa).

A signal peptide spans 1-19; the sequence is MEKLTILLLLAAVLVLAQA. Residues 20–38 constitute a propeptide that is removed on maturation; that stretch reads LIKKGGGEKRQKEKINFLS. 3 disulfide bridges follow: Cys-52/Cys-66, Cys-59/Cys-70, and Cys-65/Cys-75.

It belongs to the conotoxin O2 superfamily. In terms of tissue distribution, expressed by the venom duct.

It is found in the secreted. In Conus tessulatus (Tessellate cone), this protein is Conotoxin TsMEKL-P012.